We begin with the raw amino-acid sequence, 84 residues long: Small ribosomal subunit protein bS16 (84 aa).

This sequence belongs to the bacterial ribosomal protein bS16 family.

The protein is Small ribosomal subunit protein bS16 of Delftia acidovorans (strain DSM 14801 / SPH-1).